An 876-amino-acid polypeptide reads, in one-letter code: Liprin-beta-2 (876 aa).

Residues 101 to 313 are a coiled coil; that stretch reads AASNETYQER…TGLLNQYRKV (213 aa). Residues Ser329, Ser363, and Ser387 each carry the phosphoserine modification. A disordered region spans residues 356–376; the sequence is EMPPRCSSPTVGPPPLPQKSL. Disordered stretches follow at residues 425-451 and 470-500; these read LPGKLSGATPNGEAAKSPPTICQPDAT and VVNDLSSTSSGTESGPQSPLTPDGKRNPKGI. The segment covering 473 to 489 has biased composition (polar residues); the sequence is DLSSTSSGTESGPQSPL. Phosphoserine is present on Ser512. The segment at 527 to 553 is disordered; it reads RGGLRATAGPRLSRTRDSKGQKSDANA. 3 consecutive SAM domains span residues 558–622, 630–693, and 718–783; these read WSTE…INTK, LDHI…LHVN, and WSNH…KFNA.

The protein belongs to the liprin family. Liprin-beta subfamily. In terms of assembly, forms homodimers and heterodimers. As to expression, widely expressed.

Its function is as follows. May regulate the disassembly of focal adhesions. Did not bind receptor-like tyrosine phosphatases type 2A. This is Liprin-beta-2 (PPFIBP2) from Homo sapiens (Human).